The following is a 249-amino-acid chain: Transcriptional activator protein EsaR (249 aa).

Positions 174 to 239 (QSADKTIFSS…QAIRLGVELD (66 aa)) constitute an HTH luxR-type domain. The H-T-H motif DNA-binding region spans 198–217 (YAEIAAITGISVSTVKFHIK).

The protein belongs to the autoinducer-regulated transcriptional regulatory protein family.

In terms of biological role, functions as a potential OhlL-responsive transcriptional regulator. The chain is Transcriptional activator protein EsaR (esaR) from Pantoea stewartii subsp. stewartii (Erwinia stewartii).